Consider the following 762-residue polypeptide: 5-methyltetrahydropteroyltriglutamate--homocysteine methyltransferase (762 aa).

5-methyltetrahydropteroyltri-L-glutamate contacts are provided by residues 18–21 (REWK) and Lys-112. L-homocysteine is bound by residues 435–437 (IGS) and Glu-488. Residues 435–437 (IGS) and Glu-488 each bind L-methionine. 5-methyltetrahydropteroyltri-L-glutamate-binding positions include 519–520 (RC) and Trp-565. Residue Asp-603 participates in L-homocysteine binding. An L-methionine-binding site is contributed by Asp-603. 5-methyltetrahydropteroyltri-L-glutamate is bound at residue Glu-609. Zn(2+) is bound by residues His-645, Cys-647, and Glu-669. His-698 serves as the catalytic Proton donor. Cys-730 contributes to the Zn(2+) binding site.

Belongs to the vitamin-B12 independent methionine synthase family. The cofactor is Zn(2+).

The enzyme catalyses 5-methyltetrahydropteroyltri-L-glutamate + L-homocysteine = tetrahydropteroyltri-L-glutamate + L-methionine. It participates in amino-acid biosynthesis; L-methionine biosynthesis via de novo pathway; L-methionine from L-homocysteine (MetE route): step 1/1. Its function is as follows. Catalyzes the transfer of a methyl group from 5-methyltetrahydrofolate to homocysteine resulting in methionine formation. The protein is 5-methyltetrahydropteroyltriglutamate--homocysteine methyltransferase of Bacillus velezensis (strain DSM 23117 / BGSC 10A6 / LMG 26770 / FZB42) (Bacillus amyloliquefaciens subsp. plantarum).